The chain runs to 108 residues: uncharacterized protein (108 aa).

Transmembrane regions (helical) follow at residues 5 to 27 (TVYG…QLEI) and 83 to 105 (IFLM…LNIF).

Its subcellular location is the membrane. This is an uncharacterized protein from Schizosaccharomyces pombe (strain 972 / ATCC 24843) (Fission yeast).